The following is a 386-amino-acid chain: Methylthioribose-1-phosphate isomerase (386 aa).

The Proton donor role is filled by aspartate 261.

The protein belongs to the eIF-2B alpha/beta/delta subunits family. MtnA subfamily.

The protein localises to the cytoplasm. The protein resides in the nucleus. It catalyses the reaction 5-(methylsulfanyl)-alpha-D-ribose 1-phosphate = 5-(methylsulfanyl)-D-ribulose 1-phosphate. Its pathway is amino-acid biosynthesis; L-methionine biosynthesis via salvage pathway; L-methionine from S-methyl-5-thio-alpha-D-ribose 1-phosphate: step 1/6. Its function is as follows. Catalyzes the interconversion of methylthioribose-1-phosphate (MTR-1-P) into methylthioribulose-1-phosphate (MTRu-1-P). The sequence is that of Methylthioribose-1-phosphate isomerase from Paracoccidioides brasiliensis (strain Pb03).